The following is a 199-amino-acid chain: Putative pseudouridine methyltransferase (199 aa).

The S-adenosyl-L-methionine site is built by L132 and C186.

This sequence belongs to the methyltransferase superfamily. TrmY family.

The protein resides in the cytoplasm. This is Putative pseudouridine methyltransferase from Vibrio campbellii (strain ATCC BAA-1116).